The sequence spans 318 residues: Lipoyl synthase (318 aa).

Residues Cys-64, Cys-69, Cys-75, Cys-90, Cys-94, Cys-97, and Ser-304 each coordinate [4Fe-4S] cluster. The Radical SAM core domain occupies 76 to 293 (FSGGTATFMI…AEEGYKMGFK (218 aa)).

The protein belongs to the radical SAM superfamily. Lipoyl synthase family. It depends on [4Fe-4S] cluster as a cofactor.

Its subcellular location is the cytoplasm. The catalysed reaction is [[Fe-S] cluster scaffold protein carrying a second [4Fe-4S](2+) cluster] + N(6)-octanoyl-L-lysyl-[protein] + 2 oxidized [2Fe-2S]-[ferredoxin] + 2 S-adenosyl-L-methionine + 4 H(+) = [[Fe-S] cluster scaffold protein] + N(6)-[(R)-dihydrolipoyl]-L-lysyl-[protein] + 4 Fe(3+) + 2 hydrogen sulfide + 2 5'-deoxyadenosine + 2 L-methionine + 2 reduced [2Fe-2S]-[ferredoxin]. The protein operates within protein modification; protein lipoylation via endogenous pathway; protein N(6)-(lipoyl)lysine from octanoyl-[acyl-carrier-protein]: step 2/2. Catalyzes the radical-mediated insertion of two sulfur atoms into the C-6 and C-8 positions of the octanoyl moiety bound to the lipoyl domains of lipoate-dependent enzymes, thereby converting the octanoylated domains into lipoylated derivatives. In Pseudomonas syringae pv. tomato (strain ATCC BAA-871 / DC3000), this protein is Lipoyl synthase.